An 868-amino-acid polypeptide reads, in one-letter code: Monofunctional pimaradiene synthase (868 aa).

Mg(2+)-binding residues include Asp-620, Asp-624, Asn-764, Thr-768, and Glu-772.

The protein belongs to the terpene synthase family. Tpsd subfamily. Mg(2+) is required as a cofactor.

The enzyme catalyses (+)-copalyl diphosphate = (-)-pimara-8(14),15-diene + diphosphate. Its pathway is terpene metabolism; oleoresin biosynthesis. Involved in defensive oleoresin formation in conifers in response to insect attack or other injury. Involved in diterpene (C20) olefins biosynthesis. Monofunctional enzyme lacking the DXDD motif in the class II active site relevant for the cyclization of geranylgeranyl diphosphate (GGPP). Requires (+)-copalyl diphosphate ((+)-CPP) as substrate, but no activity with GGPP or ent-CPP. Pimaradiene is the major products of the enzyme. The polypeptide is Monofunctional pimaradiene synthase (Pinus contorta (Shore pine)).